A 900-amino-acid chain; its full sequence is MTEESEETVLYIEHRYVCSECNQLYGSLEEVLVHQNSHVPQQHFELVGVADPGVTVATEAASGTGLYQTLIQESQYQCLECGQLLLSPSQLLEHQELHLKMMAPQEAVPAKPPPKVPPLGSSAIHYECVDCKALFASQEMWLSHRQTHLRATPNKAPAPVVLGSPVVLGPPVGQARVAVEHSYRKAEEGGEGAAVPSVAATTEMVTEVELLLYKCSECSQLFQMPADFLEHQATHFPAPVPEAAEPATQQETQVPSPTEAAVSQPEPLPASDHSYELRNELRNGEAIGRDRRGRKPRRNNSGESGGAATQELFCSACDQLFLSPHQLQQHLRSHREGVFKCPLCSRVFPSPSSLDQHLGDHSSESHFLCVDCGLAFGTEALLLAHRRAHTPNPLHSCPCGKTFVNLTKFLYHRRTHGAGGVPLPTTPVPPEEPAISFPEPAPAETGELEAPELPVCEESSAEPAAPGSYRCLLCSREFGKALQLTRHQRFVHRLERRHKCSICGKMFKKKSHVRNHLRTHTGERPFPCPDCSKPFNSPANLARHRLTHTGERPYRCGDCGKAFTQSSTLRQHRLVHAQHFPYRCQECGVRFHRPYRLLMHRYHHTGEYPYKCRECPRSFLLRRLLEVHQLVIHAGRQPYRCSSCGAAFPSSLRLREHRCAAAAAQAPRRFECGTCGKKVGSAARLQAHEAAHAAAGPGEVLAKEPPAPRASRATRTPVAPSPTALSGTTSAAPAAPARRRGPECSECKKLFSTETSLQVHRRIHTGERPYPCPDCGKAFRQSTHLKDHRRLHTGERPFACEVCGKAFAISMRLAEHRRIHTGERPYSCPDCGKSYRSFSNLWKHRKTHQQQHQAAVRQQLAEAEAAVGLAVMETAVEALPLVEAIEIYPLAEADGVQISG.

C2H2-type zinc fingers lie at residues 16–38, 76–98, and 126–148; these read YVCSECNQLYGSLEEVLVHQNSH, YQCLECGQLLLSPSQLLEHQELH, and YECVDCKALFASQEMWLSHRQTH. The residue at position 164 (Ser-164) is a Phosphoserine. The C2H2-type 4 zinc-finger motif lies at 213 to 235; it reads YKCSECSQLFQMPADFLEHQATH. The segment covering 244-254 has biased composition (low complexity); sequence AEPATQQETQV. A disordered region spans residues 244 to 306; it reads AEPATQQETQ…RRNNSGESGG (63 aa). A compositionally biased stretch (basic and acidic residues) spans 273–290; the sequence is HSYELRNELRNGEAIGRD. Position 301 is a phosphoserine (Ser-301). C2H2-type zinc fingers lie at residues 312 to 334, 339 to 361, 367 to 389, 395 to 416, 469 to 492, 498 to 520, 526 to 548, 554 to 576, 582 to 604, and 610 to 633; these read LFCSACDQLFLSPHQLQQHLRSH, FKCPLCSRVFPSPSSLDQHLGDH, FLCVDCGLAFGTEALLLAHRRAH, HSCPCGKTFVNLTKFLYHRRTH, YRCLLCSREFGKALQLTRHQRFVH, HKCSICGKMFKKKSHVRNHLRTH, FPCPDCSKPFNSPANLARHRLTH, YRCGDCGKAFTQSSTLRQHRLVH, YRCQECGVRFHRPYRLLMHRYHH, and YKCRECPRSFLLRRLLEVHQLVIH. The C2H2-type 15; degenerate zinc finger occupies 639 to 662; it reads YRCSSCGAAFPSSLRLREHRCAAA. The segment at 670 to 692 adopts a C2H2-type 16 zinc-finger fold; it reads FECGTCGKKVGSAARLQAHEAAH. The segment at 690 to 741 is disordered; that stretch reads AAHAAAGPGEVLAKEPPAPRASRATRTPVAPSPTALSGTTSAAPAAPARRRG. Phosphoserine is present on Ser-721. The segment covering 721 to 736 has biased composition (low complexity); that stretch reads SPTALSGTTSAAPAAP. Thr-728 is subject to Phosphothreonine. C2H2-type zinc fingers lie at residues 742–764, 770–792, 798–820, and 826–848; these read PECSECKKLFSTETSLQVHRRIH, YPCPDCGKAFRQSTHLKDHRRLH, FACEVCGKAFAISMRLAEHRRIH, and YSCPDCGKSYRSFSNLWKHRKTH. Arg-836 carries the asymmetric dimethylarginine modification.

This sequence belongs to the krueppel C2H2-type zinc-finger protein family.

The protein localises to the nucleus. In terms of biological role, may be involved in transcriptional regulation. The chain is Zinc finger protein 574 (Znf574) from Mus musculus (Mouse).